Reading from the N-terminus, the 343-residue chain is GTPase Obg (343 aa).

Residues 1 to 159 (MKFLDQAKIY…RWVWLRLKLI (159 aa)) enclose the Obg domain. Positions 160–328 (ADAGLVGLPN…LLRQVMTYVA (169 aa)) constitute an OBG-type G domain. Residues 166–173 (GLPNAGKS), 191–195 (FTTLH), 213–216 (DIPG), 280–283 (NKCD), and 309–311 (SGV) each bind GTP. Residues S173 and T193 each coordinate Mg(2+).

The protein belongs to the TRAFAC class OBG-HflX-like GTPase superfamily. OBG GTPase family. Monomer. Requires Mg(2+) as cofactor.

Its subcellular location is the cytoplasm. In terms of biological role, an essential GTPase which binds GTP, GDP and possibly (p)ppGpp with moderate affinity, with high nucleotide exchange rates and a fairly low GTP hydrolysis rate. Plays a role in control of the cell cycle, stress response, ribosome biogenesis and in those bacteria that undergo differentiation, in morphogenesis control. The chain is GTPase Obg from Granulibacter bethesdensis (strain ATCC BAA-1260 / CGDNIH1).